The chain runs to 198 residues: Recombination protein RecR (198 aa).

The segment at 56–71 adopts a C4-type zinc-finger fold; it reads CEICGNVSEQATCSIC. One can recognise a Toprim domain in the interval 79–174; it reads ALICVVEEAK…RVTRLASGLP (96 aa).

The protein belongs to the RecR family.

Its function is as follows. May play a role in DNA repair. It seems to be involved in an RecBC-independent recombinational process of DNA repair. It may act with RecF and RecO. This chain is Recombination protein RecR, found in Leifsonia xyli subsp. xyli (strain CTCB07).